We begin with the raw amino-acid sequence, 360 residues long: Phospho-N-acetylmuramoyl-pentapeptide-transferase (360 aa).

The next 10 membrane-spanning stretches (helical) occupy residues 24 to 44 (RAVMAALTALAFSLMFGPWTI), 69 to 89 (GTPTMGGSLILTAITVSTLLW), 92 to 112 (WANPYIWILLGVLLATGALGF), 133 to 153 (MVWQSSVAIIAGLALFYLAAN), 158 to 178 (ILIVPFFKQIALPLGVVGFLV), 199 to 219 (GLATFPVVLVAAGLAIFAYAS), 239 to 259 (VVIFCTAMCGACLGFLWFNAY), 263 to 283 (VFMGDVGALALGAALGTVAVI), 288 to 308 (FVLVIMGGLFVVEAVSVMLQV), and 337 to 357 (QVVVRFWIITIVLVLIGLSTL).

This sequence belongs to the glycosyltransferase 4 family. MraY subfamily. The cofactor is Mg(2+).

Its subcellular location is the cell inner membrane. It carries out the reaction UDP-N-acetyl-alpha-D-muramoyl-L-alanyl-gamma-D-glutamyl-meso-2,6-diaminopimeloyl-D-alanyl-D-alanine + di-trans,octa-cis-undecaprenyl phosphate = di-trans,octa-cis-undecaprenyl diphospho-N-acetyl-alpha-D-muramoyl-L-alanyl-D-glutamyl-meso-2,6-diaminopimeloyl-D-alanyl-D-alanine + UMP. It participates in cell wall biogenesis; peptidoglycan biosynthesis. In terms of biological role, catalyzes the initial step of the lipid cycle reactions in the biosynthesis of the cell wall peptidoglycan: transfers peptidoglycan precursor phospho-MurNAc-pentapeptide from UDP-MurNAc-pentapeptide onto the lipid carrier undecaprenyl phosphate, yielding undecaprenyl-pyrophosphoryl-MurNAc-pentapeptide, known as lipid I. The polypeptide is Phospho-N-acetylmuramoyl-pentapeptide-transferase (Neisseria meningitidis serogroup A / serotype 4A (strain DSM 15465 / Z2491)).